Here is a 433-residue protein sequence, read N- to C-terminus: Enolase (433 aa).

Residue Q167 participates in (2R)-2-phosphoglycerate binding. The active-site Proton donor is the E209. Positions 246, 291, and 318 each coordinate Mg(2+). (2R)-2-phosphoglycerate is bound by residues K343, R372, S373, and K394. Catalysis depends on K343, which acts as the Proton acceptor.

Belongs to the enolase family. In terms of assembly, component of the RNA degradosome, a multiprotein complex involved in RNA processing and mRNA degradation. Mg(2+) serves as cofactor.

Its subcellular location is the cytoplasm. The protein resides in the secreted. It localises to the cell surface. The catalysed reaction is (2R)-2-phosphoglycerate = phosphoenolpyruvate + H2O. It participates in carbohydrate degradation; glycolysis; pyruvate from D-glyceraldehyde 3-phosphate: step 4/5. Functionally, catalyzes the reversible conversion of 2-phosphoglycerate (2-PG) into phosphoenolpyruvate (PEP). It is essential for the degradation of carbohydrates via glycolysis. The chain is Enolase from Vibrio vulnificus (strain CMCP6).